Reading from the N-terminus, the 1334-residue chain is CRISPR-associated endonuclease Cas9 (1334 aa).

D10 functions as the For RuvC-like nuclease domain in the catalytic mechanism. Positions 10, 765, and 769 each coordinate Mn(2+). One can recognise an HNH Cas9-type domain in the interval 773–924; sequence TGKGKNNSRP…DKARFIHRQL (152 aa). The Proton acceptor for HNH nuclease domain role is filled by H843. H986 provides a ligand contact to Mn(2+).

This sequence belongs to the CRISPR-associated protein Cas9 family. Subtype II-A subfamily. In terms of assembly, monomer. Binds crRNA and tracrRNA. Mg(2+) serves as cofactor.

Functionally, CRISPR (clustered regularly interspaced short palindromic repeat) is an adaptive immune system that provides protection against mobile genetic elements (viruses, transposable elements and conjugative plasmids). CRISPR clusters contain spacers, sequences complementary to antecedent mobile elements, and target invading nucleic acids. CRISPR clusters are transcribed and processed into CRISPR RNA (crRNA). In type II CRISPR systems correct processing of pre-crRNA requires a trans-encoded small RNA (tracrRNA), endogenous ribonuclease 3 (rnc) and this protein. The tracrRNA serves as a guide for ribonuclease 3-aided processing of pre-crRNA. Subsequently Cas9/crRNA/tracrRNA endonucleolytically cleaves linear or circular dsDNA target complementary to the spacer; Cas9 is inactive in the absence of the 2 guide RNAs (gRNA). Cas9 recognizes the protospacer adjacent motif (PAM) in the CRISPR repeat sequences to help distinguish self versus nonself, as targets within the bacterial CRISPR locus do not have PAMs. PAM recognition is also required for catalytic activity. This Listeria innocua serovar 6a (strain ATCC BAA-680 / CLIP 11262) protein is CRISPR-associated endonuclease Cas9.